We begin with the raw amino-acid sequence, 258 residues long: Hemin import ATP-binding protein HmuV (258 aa).

Residues Leu2–Pro242 form the ABC transporter domain. Gly34 to Ser41 is an ATP binding site.

Belongs to the ABC transporter superfamily. Heme (hemin) importer (TC 3.A.1.14.5) family. As to quaternary structure, the complex is composed of two ATP-binding proteins (HmuV), two transmembrane proteins (HmuU) and a solute-binding protein (HmuT).

The protein localises to the cell inner membrane. Its function is as follows. Part of the ABC transporter complex HmuTUV involved in hemin import. Responsible for energy coupling to the transport system. This chain is Hemin import ATP-binding protein HmuV, found in Hydrogenovibrio crunogenus (strain DSM 25203 / XCL-2) (Thiomicrospira crunogena).